The primary structure comprises 243 residues: Small ribosomal subunit protein uS3 (243 aa).

The KH type-2 domain occupies 38-106; sequence IRKYLNARLA…DIQINIFEVK (69 aa). The tract at residues 217-243 is disordered; the sequence is TQTKESGRGGNGNNNGGKNFKRKKNNR.

This sequence belongs to the universal ribosomal protein uS3 family. In terms of assembly, part of the 30S ribosomal subunit. Forms a tight complex with proteins S10 and S14.

In terms of biological role, binds the lower part of the 30S subunit head. Binds mRNA in the 70S ribosome, positioning it for translation. This chain is Small ribosomal subunit protein uS3, found in Phocaeicola vulgatus (strain ATCC 8482 / DSM 1447 / JCM 5826 / CCUG 4940 / NBRC 14291 / NCTC 11154) (Bacteroides vulgatus).